We begin with the raw amino-acid sequence, 469 residues long: Secreted triacylglycerol lipase LIP3 (469 aa).

The signal sequence occupies residues 1-21 (MVSLLWKFTLLCLFLLACTSA). Cys121 and Cys292 are oxidised to a cystine. Residue Ser205 is the Nucleophile of the active site. Asn238 carries N-linked (GlcNAc...) asparagine glycosylation. Residues Asp352 and His386 contribute to the active site.

The protein belongs to the AB hydrolase superfamily. Lipase family. Class Lip subfamily.

It localises to the secreted. It carries out the reaction a triacylglycerol + H2O = a diacylglycerol + a fatty acid + H(+). It catalyses the reaction a monoacylglycerol + H2O = glycerol + a fatty acid + H(+). The enzyme catalyses a diacylglycerol + H2O = a monoacylglycerol + a fatty acid + H(+). Its function is as follows. Secreted lipase that hydrolyzes acylglycerol lipids such as triacylglycerols and consequently releases free fatty acid. Generates free oleic acid from the substrates mono- and diolein and hydrolyzes triolein in significant amounts. Due to an absence of fatty acid synthase genes in Malassezia species, secretory lipases are essential for the yeast to generate free fatty acids from degradation of sebum and assimilate them as lipid sources for growth. Plays an essential role at the pathogen-host interface during disease progression. Performs also the reverse reaction to build diacyl- and triacyl- glycerols from monoacylglycerols. The polypeptide is Secreted triacylglycerol lipase LIP3 (Malassezia restricta (strain ATCC 96810 / NBRC 103918 / CBS 7877) (Seborrheic dermatitis infection agent)).